We begin with the raw amino-acid sequence, 640 residues long: PTS system mannitol-specific EIICBA component (640 aa).

Residues 12–343 enclose the PTS EIIC type-2 domain; that stretch reads LGRFLSAMIM…LKISNRNHYV (332 aa). 6 helical membrane-spanning segments follow: residues 24–45, 50–70, 134–155, 165–185, 273–292, and 313–334; these read ISVFIAWGIISGLFIKSGWCPN, KVLSPISVYLFPILIANTGGY, SVGILGVLLLFISFLCIGPMIE, VNLMINNHLLPFIAILIEPAK, LILGSITGIFILIVLRGGLI, and VINLLAIIISFLVSFLVSCMLL. Residues 379–475 enclose the PTS EIIB type-2 domain; sequence RNIIFACDAG…YLVENNLDNN (97 aa). C385 functions as the Phosphocysteine intermediate; for EIIB activity in the catalytic mechanism. C385 bears the Phosphocysteine; by EIIA mark. In terms of domain architecture, PTS EIIA type-2 spans 496 to 638; that stretch reads FSLTKENIFL…DDVLYLFSRK (143 aa). The active-site Tele-phosphohistidine intermediate; for EIIA activity is H556. Phosphohistidine; by HPr is present on H556.

In terms of assembly, homodimer. In terms of processing, an intramolecular phosphotransfer takes places between His-556 and Cys-385.

The protein localises to the cell inner membrane. It carries out the reaction D-mannitol(out) + N(pros)-phospho-L-histidyl-[protein] = D-mannitol 1-phosphate(in) + L-histidyl-[protein]. Functionally, the phosphoenolpyruvate-dependent sugar phosphotransferase system (sugar PTS), a major carbohydrate active transport system, catalyzes the phosphorylation of incoming sugar substrates concomitantly with their translocation across the cell membrane. This system is involved in D-mannitol transport. The chain is PTS system mannitol-specific EIICBA component (mtlA) from Buchnera aphidicola subsp. Baizongia pistaciae (strain Bp).